The following is a 375-amino-acid chain: Arabinose metabolism transcriptional repressor (375 aa).

The 70-residue stretch at 1 to 70 folds into the HTH gntR-type domain; sequence METKYNFVKQ…QGAGTFCADR (70 aa). A DNA-binding region (H-T-H motif) is located at residues 30–49; that stretch reads ENELMKEYNVSRHTVRKAID.

It is found in the cytoplasm. Transcriptional repressor of the arabinose utilization genes. This chain is Arabinose metabolism transcriptional repressor (araR), found in Halalkalibacterium halodurans (strain ATCC BAA-125 / DSM 18197 / FERM 7344 / JCM 9153 / C-125) (Bacillus halodurans).